The following is a 398-amino-acid chain: Cathepsin D (398 aa).

An N-terminal signal peptide occupies residues 1–20 (MAPRGLLVLLLLALVGPCAA). Residues 21–63 (LIRIPLTKFTSTRRMLTEVGSEIPDMNAITQFLKFKLGFADLA) constitute a propeptide, activation peptide. The Peptidase A1 domain maps to 78-395 (YYGEIGIGTP…DRDNDSVGFA (318 aa)). Asp96 is an active-site residue. A disulfide bridge links Cys109 with Cys116. N-linked (GlcNAc...) asparagine glycosylation is found at Asn133 and Asn251. The cysteines at positions 274 and 278 are disulfide-linked. Asp283 is a catalytic residue. Cys317 and Cys354 are oxidised to a cystine.

The protein belongs to the peptidase A1 family. As to quaternary structure, consists of a light chain and a heavy chain. Oocytic yolk, preovulatory follicles, liver.

The protein resides in the lysosome. It catalyses the reaction Specificity similar to, but narrower than, that of pepsin A. Does not cleave the 4-Gln-|-His-5 bond in B chain of insulin.. Its function is as follows. Acid protease active in intracellular protein breakdown. In chicken it is a key enzyme for yolk formation as it is capable of catalyzing intra oocytic break down of protein components of both vitellogenin and VLDL. This Gallus gallus (Chicken) protein is Cathepsin D (CTSD).